Consider the following 928-residue polypeptide: Tyrosine-protein phosphatase 3 (928 aa).

Threonine 75 is subject to Phosphothreonine. Residues 111 to 232 (PDEKVLLLDV…FKILFPDHIN (122 aa)) form the Rhodanese domain. Positions 247–307 (KSPKTNLMNS…PRNVLSDSPM (61 aa)) are disordered. Serine 248 is modified (phosphoserine). 2 stretches are compositionally biased toward polar residues: residues 249–259 (PKTNLMNSLHN) and 265–275 (TATTPLSSPQM). Residues 280 to 289 (KVPDDSRSDH) are compositionally biased toward basic and acidic residues. The span at 290 to 307 (SNFSSSPSPRNVLSDSPM) shows a compositional bias: low complexity. Phosphoserine is present on residues serine 297 and serine 368. Disordered stretches follow at residues 467–487 (LTST…NKVQ) and 672–713 (MRKN…NNNN). In terms of domain architecture, Tyrosine-protein phosphatase spans 502–878 (YKSMLSLESD…IFIYDCLLFY (377 aa)). Over residues 672-691 (MRKNTMGTQNSSLYSAGVQG) the composition is skewed to polar residues. Positions 692-713 (NSSNYSTDNDNDNDNNNNNNNN) are enriched in low complexity. The active-site Phosphocysteine intermediate is the cysteine 804.

Belongs to the protein-tyrosine phosphatase family. Non-receptor class subfamily. As to quaternary structure, interacts with HOG1.

Its subcellular location is the cytoplasm. The enzyme catalyses O-phospho-L-tyrosyl-[protein] + H2O = L-tyrosyl-[protein] + phosphate. Functionally, major phosphatase responsible for tyrosine dephosphorylation of MAP kinases FUS3 and HOG1 to inactivate their activity; it also has important roles, along with MSG5, in the inactivation of FUS3 following pheromone stimulation. In Saccharomyces cerevisiae (strain ATCC 204508 / S288c) (Baker's yeast), this protein is Tyrosine-protein phosphatase 3 (PTP3).